Here is a 184-residue protein sequence, read N- to C-terminus: Type-1 fimbrial protein, A chain (184 aa).

Residues 1-23 (MKIKTLAIVVLSALSLSSTAALA) form the signal peptide. Cys-46 and Cys-86 form a disulfide bridge.

Belongs to the fimbrial protein family.

Its subcellular location is the fimbrium. Its function is as follows. Fimbriae (also called pili), polar filaments radiating from the surface of the bacterium to a length of 0.5-1.5 micrometers and numbering 100-300 per cell, enable bacteria to colonize the epithelium of specific host organs. The polypeptide is Type-1 fimbrial protein, A chain (Escherichia coli).